The sequence spans 698 residues: MSKSSPIEPVSASDVSQQFRDPGLYLNRELSQLDFNFRVLAQALDEQVPLLERLRFLCISCTNLDEFFEIRVATVRHAQEFGLPPAPDGMRPTVILNAVHDLTTKLVHDQYNCWNQVLCPALAALGVGVLSHNSWNARQKRWLRGYFRNEIMPVLSPLGLDPAHPFPKIFNKTLNIVVVLNGIDAFGRAGHLAIVRAPRSLPRIIELPQHLSRDGSQNFVFLSSVLSAFVGELFPGMVVRGAYQFRVTRNSELVVDEDEVENLALALRNELVTRGYRLAVRLEIAEDCPTPIVRTLLQNFGLQENAVYRINGPVNLSRVSQVYDMVLRPELKYPPFNPRTLRNSDHIFEIIAKGDVLLYHPYDAFTAVLDLLRQAAADPDVLAIKQTLYRTGKDSTIVDALIQAARSGKDVTVVVELRARFDEEANLGLADKLQEAGVQVVYGVVGYKTHAKMLLIVRREGRKLRRYVHLGTGNYHSGTARIYTDLSLMTANAAIGKDVHQLFLQLSGLAPKMKLECLLQSPFTLHAGVLFRIERETKFARKGRPARIVAKMNALNEPQVVRALYVASQAGVQIDLIVRGACTLRPGVQDISENIRVRSIVGRFLEHSRVYWFANNGTPELFCASADWLERNLLRRVEICFPILNPDLAKRIYSDVLQSYLDDNLNAWELGSDGVYRKLLPETDHAPYSAQVALLESL.

ATP is bound at residue Asn63. Residues Arg390 and Arg420 each contribute to the Mg(2+) site. Catalysis depends on His450, which acts as the Phosphohistidine intermediate. Residues Tyr483, Arg579, and His607 each contribute to the ATP site.

This sequence belongs to the polyphosphate kinase 1 (PPK1) family. Requires Mg(2+) as cofactor. Post-translationally, an intermediate of this reaction is the autophosphorylated ppk in which a phosphate is covalently linked to a histidine residue through a N-P bond.

It carries out the reaction [phosphate](n) + ATP = [phosphate](n+1) + ADP. Functionally, catalyzes the reversible transfer of the terminal phosphate of ATP to form a long-chain polyphosphate (polyP). The sequence is that of Polyphosphate kinase from Xylella fastidiosa (strain 9a5c).